Here is a 635-residue protein sequence, read N- to C-terminus: MQLLLIHSDYIEYETKKQTPVAEKIEESLKSGRLEEALTAFTAVESVDEANPEEAIEKAVSEIEKVAAQVKTNRIMLYPYAHLSSDLSSPKVAVQVLKGIEAALSGKYEVKRAPFGWYKAFTVSCKGHPLSELSRSIHPEGTAKAAVKPEAAGEKEEVVSEALKAEGTARSYWRILTPDGELHEVETFDLTPYPKLQQFVNYEISKSRAVERAPPHVELMRRLELADYEPGSDSGNMRYYPKGRLVKSLLENYVLDVATEFGAMEVETPLMYDMNHPTLKKYLDRFPARQYSIESDKRQMFLRFAACFGQFLMNHDMTISYKNLPLRMIEMTRYSFRKEQRGELVGLRRLRAFTMPDMHTLCEDMNQAVSQFKEQYDLCIDVLENVGIHIDDYEVAIRFTRDFYESNKELVVNMAKTVNKPVLVEMWDTRFFYFVLKFEFNFVDALAKASALSTVQIDVENAERYDISYVNADGKLERPIVLHCSPSGAIERCIYALLEKAAMETEEGKVPMLPVWLSPTQVRIVPISEKHLAFAEEVSKKLDCRVDIDDRDLSIGKKVREAGREWVPYVVVIGDKEMEEGTINVTVRAESEQNKPSKVQITPEELNARIRGEIAGKPYRKLPLAKYLSARPKFF.

The tract at residues 1-152 is editing domain; the sequence is MQLLLIHSDY…AKAAVKPEAA (152 aa). The interval 215–514 is catalytic; that stretch reads PHVELMRRLE…TEEGKVPMLP (300 aa). Zn(2+) contacts are provided by cysteine 307, histidine 359, and histidine 483.

It belongs to the class-II aminoacyl-tRNA synthetase family. In terms of assembly, homodimer. Zn(2+) is required as a cofactor.

The protein resides in the cytoplasm. The catalysed reaction is tRNA(Thr) + L-threonine + ATP = L-threonyl-tRNA(Thr) + AMP + diphosphate + H(+). Its function is as follows. Catalyzes the attachment of threonine to tRNA(Thr) in a two-step reaction: L-threonine is first activated by ATP to form Thr-AMP and then transferred to the acceptor end of tRNA(Thr). Also edits incorrectly charged L-seryl-tRNA(Thr). The protein is Threonine--tRNA ligase of Methanosarcina acetivorans (strain ATCC 35395 / DSM 2834 / JCM 12185 / C2A).